The chain runs to 164 residues: Phosphopantetheine adenylyltransferase (164 aa).

S9 serves as a coordination point for substrate. Residues 9-10 and H17 each bind ATP; that span reads SF. Substrate-binding residues include K41, L73, and K87. Residues 88–90, E98, and 123–129 contribute to the ATP site; these read GLR and YSYISSS.

Belongs to the bacterial CoaD family. In terms of assembly, homohexamer. It depends on Mg(2+) as a cofactor.

It localises to the cytoplasm. It carries out the reaction (R)-4'-phosphopantetheine + ATP + H(+) = 3'-dephospho-CoA + diphosphate. Its pathway is cofactor biosynthesis; coenzyme A biosynthesis; CoA from (R)-pantothenate: step 4/5. Reversibly transfers an adenylyl group from ATP to 4'-phosphopantetheine, yielding dephospho-CoA (dPCoA) and pyrophosphate. The chain is Phosphopantetheine adenylyltransferase from Clostridium perfringens (strain 13 / Type A).